The chain runs to 367 residues: Ribosomal lysine N-methyltransferase 5 (367 aa).

The interval 55–74 (EGGRKKKRVRRRNKASSVEE) is disordered. Basic residues predominate over residues 58-68 (RKKKRVRRRNK). S-adenosyl-L-methionine-binding positions include W110, 170 to 172 (GAG), D192, W256, and M288.

It belongs to the class I-like SAM-binding methyltransferase superfamily. RKM5 family.

Functionally, S-adenosyl-L-methionine-dependent protein-lysine N-methyltransferase that monomethylates 60S ribosomal protein L1 (RPL1A and RPL1B) at 'Lys-46'. This chain is Ribosomal lysine N-methyltransferase 5 (RKM5), found in Saccharomyces cerevisiae (strain Lalvin EC1118 / Prise de mousse) (Baker's yeast).